Consider the following 314-residue polypeptide: Thymidylate synthase (314 aa).

DUMP contacts are provided by residues arginine 21 and 176-177 (RR). The Nucleophile role is filled by cysteine 196. Residues 216–219 (RSAD), asparagine 227, and 257–259 (HLY) each bind dUMP. Aspartate 219 is a binding site for (6R)-5,10-methylene-5,6,7,8-tetrahydrofolate. Serine 313 contacts (6R)-5,10-methylene-5,6,7,8-tetrahydrofolate.

Belongs to the thymidylate synthase family. Bacterial-type ThyA subfamily. Homodimer.

It localises to the cytoplasm. The catalysed reaction is dUMP + (6R)-5,10-methylene-5,6,7,8-tetrahydrofolate = 7,8-dihydrofolate + dTMP. It functions in the pathway pyrimidine metabolism; dTTP biosynthesis. In terms of biological role, catalyzes the reductive methylation of 2'-deoxyuridine-5'-monophosphate (dUMP) to 2'-deoxythymidine-5'-monophosphate (dTMP) while utilizing 5,10-methylenetetrahydrofolate (mTHF) as the methyl donor and reductant in the reaction, yielding dihydrofolate (DHF) as a by-product. This enzymatic reaction provides an intracellular de novo source of dTMP, an essential precursor for DNA biosynthesis. In Listeria monocytogenes serovar 1/2a (strain ATCC BAA-679 / EGD-e), this protein is Thymidylate synthase.